A 25-amino-acid chain; its full sequence is Small ribosomal subunit protein eS32 (25 aa).

Residues 1-25 are disordered; it reads MRAKWRKKRMRRLKRKRRKMRARSK.

This sequence belongs to the eukaryotic ribosomal protein eS32 family. In terms of assembly, component of the small ribosomal subunit.

This chain is Small ribosomal subunit protein eS32 (RpL41), found in Spodoptera frugiperda (Fall armyworm).